We begin with the raw amino-acid sequence, 329 residues long: Lipoyl synthase (329 aa).

A disordered region spans residues 1–23; the sequence is MTDLTATPAPAEPAASAYDPTAK. The [4Fe-4S] cluster site is built by cysteine 76, cysteine 81, cysteine 87, cysteine 102, cysteine 106, cysteine 109, and serine 316. In terms of domain architecture, Radical SAM core spans 87 to 305; the sequence is CFGKGTATFM…EEEAYKMGFT (219 aa).

The protein belongs to the radical SAM superfamily. Lipoyl synthase family. The cofactor is [4Fe-4S] cluster.

The protein localises to the cytoplasm. The catalysed reaction is [[Fe-S] cluster scaffold protein carrying a second [4Fe-4S](2+) cluster] + N(6)-octanoyl-L-lysyl-[protein] + 2 oxidized [2Fe-2S]-[ferredoxin] + 2 S-adenosyl-L-methionine + 4 H(+) = [[Fe-S] cluster scaffold protein] + N(6)-[(R)-dihydrolipoyl]-L-lysyl-[protein] + 4 Fe(3+) + 2 hydrogen sulfide + 2 5'-deoxyadenosine + 2 L-methionine + 2 reduced [2Fe-2S]-[ferredoxin]. The protein operates within protein modification; protein lipoylation via endogenous pathway; protein N(6)-(lipoyl)lysine from octanoyl-[acyl-carrier-protein]: step 2/2. Catalyzes the radical-mediated insertion of two sulfur atoms into the C-6 and C-8 positions of the octanoyl moiety bound to the lipoyl domains of lipoate-dependent enzymes, thereby converting the octanoylated domains into lipoylated derivatives. This is Lipoyl synthase from Burkholderia mallei (strain NCTC 10247).